Consider the following 186-residue polypeptide: Ribosome-recycling factor (186 aa).

This sequence belongs to the RRF family.

The protein localises to the cytoplasm. Functionally, responsible for the release of ribosomes from messenger RNA at the termination of protein biosynthesis. May increase the efficiency of translation by recycling ribosomes from one round of translation to another. The sequence is that of Ribosome-recycling factor from Chlorobium phaeobacteroides (strain DSM 266 / SMG 266 / 2430).